Consider the following 264-residue polypeptide: Hydroxyethylthiazole kinase (264 aa).

Met45 lines the substrate pocket. Residues Arg121 and Ser167 each coordinate ATP. Gly194 contacts substrate.

It belongs to the Thz kinase family. The cofactor is Mg(2+).

It catalyses the reaction 5-(2-hydroxyethyl)-4-methylthiazole + ATP = 4-methyl-5-(2-phosphooxyethyl)-thiazole + ADP + H(+). Its pathway is cofactor biosynthesis; thiamine diphosphate biosynthesis; 4-methyl-5-(2-phosphoethyl)-thiazole from 5-(2-hydroxyethyl)-4-methylthiazole: step 1/1. Catalyzes the phosphorylation of the hydroxyl group of 4-methyl-5-beta-hydroxyethylthiazole (THZ). In Aliivibrio salmonicida (strain LFI1238) (Vibrio salmonicida (strain LFI1238)), this protein is Hydroxyethylthiazole kinase.